Consider the following 237-residue polypeptide: Ribonuclease PH (237 aa).

Residues R86 and 124–126 each bind phosphate; that span reads GTR.

It belongs to the RNase PH family. In terms of assembly, homohexameric ring arranged as a trimer of dimers.

The catalysed reaction is tRNA(n+1) + phosphate = tRNA(n) + a ribonucleoside 5'-diphosphate. In terms of biological role, phosphorolytic 3'-5' exoribonuclease that plays an important role in tRNA 3'-end maturation. Removes nucleotide residues following the 3'-CCA terminus of tRNAs; can also add nucleotides to the ends of RNA molecules by using nucleoside diphosphates as substrates, but this may not be physiologically important. Probably plays a role in initiation of 16S rRNA degradation (leading to ribosome degradation) during starvation. This is Ribonuclease PH from Xanthobacter autotrophicus (strain ATCC BAA-1158 / Py2).